The following is an 846-amino-acid chain: Structure-specific endonuclease subunit SLX4 (846 aa).

7 disordered regions span residues 1–20 (MTDH…VGSA), 84–111 (KAGA…AESM), 123–164 (QPAE…VKKA), 283–322 (RTSK…SKIT), 480–513 (DPTP…SSLL), 624–690 (PPNA…MGSQ), and 723–751 (TLAS…QTRA). Positions 141–153 (KPSEKGQKSEKTA) are enriched in basic and acidic residues. Positions 293-303 (LDTGTSSTSEG) are enriched in polar residues. Basic residues predominate over residues 306–318 (KRKQTKKAKRSAK). Composition is skewed to polar residues over residues 657-680 (KEIT…SKPT) and 725-751 (ASRS…QTRA).

Belongs to the SLX4 family. In terms of assembly, forms a heterodimer with SLX1. Post-translationally, phosphorylated in response to DNA damage.

Its subcellular location is the nucleus. In terms of biological role, regulatory subunit of the SLX1-SLX4 structure-specific endonuclease that resolves DNA secondary structures generated during DNA repair and recombination. Has endonuclease activity towards branched DNA substrates, introducing single-strand cuts in duplex DNA close to junctions with ss-DNA. This is Structure-specific endonuclease subunit SLX4 from Arthroderma otae (strain ATCC MYA-4605 / CBS 113480) (Microsporum canis).